The following is a 153-amino-acid chain: MSEQNNTEMSFQIQRIYTKDISFEAPNAPQVFQKEWEPEVKLDLDTASSQLADDVYEVVLRVTVTATVGEDSAFLCEVQQAGIFSVGGIDGTQMAHCLGAYCPNILFPYARECITSLVARGTFPQLNLAPVNFDALFMNYLQQSEGAAQQQDA.

This sequence belongs to the SecB family. In terms of assembly, homotetramer, a dimer of dimers. One homotetramer interacts with 1 SecA dimer.

Its subcellular location is the cytoplasm. In terms of biological role, one of the proteins required for the normal export of preproteins out of the cell cytoplasm. It is a molecular chaperone that binds to a subset of precursor proteins, maintaining them in a translocation-competent state. It also specifically binds to its receptor SecA. The sequence is that of Protein-export protein SecB from Erwinia tasmaniensis (strain DSM 17950 / CFBP 7177 / CIP 109463 / NCPPB 4357 / Et1/99).